The chain runs to 926 residues: Protein transport protein SEC24-2 (926 aa).

The tract at residues Met1–Ala54 is disordered. The span at Ala20–Ala54 shows a compositional bias: low complexity. Cys231, Cys234, Cys253, and Cys256 together coordinate Zn(2+). The tract at residues Cys231 to Cys256 is zinc finger-like.

The protein belongs to the SEC23/SEC24 family. SEC24 subfamily. The COPII coat is composed of at least 5 proteins: the SEC23/24 complex, the SEC13/31 complex, and the protein SAR1. Golgi apparatus membrane; Peripheral membrane protein; Cytoplasmic side.

Its subcellular location is the cytoplasm. It is found in the cytoplasmic vesicle. The protein localises to the COPII-coated vesicle membrane. It localises to the endoplasmic reticulum membrane. The protein resides in the golgi apparatus membrane. In terms of biological role, component of the coat protein complex II (COPII) which promotes the formation of transport vesicles from the endoplasmic reticulum (ER). The coat has two main functions, the physical deformation of the endoplasmic reticulum membrane into vesicles and the selection of cargo molecules. The chain is Protein transport protein SEC24-2 (SEC242) from Saccharomyces uvarum (strain ATCC 76518 / CBS 7001 / CLIB 283 / NBRC 10550 / MCYC 623 / NCYC 2669 / NRRL Y-11845) (Yeast).